A 306-amino-acid polypeptide reads, in one-letter code: tRNA dimethylallyltransferase (306 aa).

14 to 21 serves as a coordination point for ATP; it reads GPTAAGKS. 16–21 serves as a coordination point for substrate; it reads TAAGKS. The segment at 39 to 42 is interaction with substrate tRNA; it reads DSRL.

It belongs to the IPP transferase family. Monomer. It depends on Mg(2+) as a cofactor.

The enzyme catalyses adenosine(37) in tRNA + dimethylallyl diphosphate = N(6)-dimethylallyladenosine(37) in tRNA + diphosphate. Catalyzes the transfer of a dimethylallyl group onto the adenine at position 37 in tRNAs that read codons beginning with uridine, leading to the formation of N6-(dimethylallyl)adenosine (i(6)A). The protein is tRNA dimethylallyltransferase of Synechococcus sp. (strain ATCC 27144 / PCC 6301 / SAUG 1402/1) (Anacystis nidulans).